Consider the following 438-residue polypeptide: Glutamyl-tRNA(Gln) amidotransferase subunit D (438 aa).

Residues 91–421 (KNLSILSTGG…SEIYEIMKTN (331 aa)) enclose the Asparaginase/glutaminase domain. Residues threonine 101, threonine 177, aspartate 178, and lysine 254 contribute to the active site.

Belongs to the asparaginase 1 family. GatD subfamily. Heterodimer of GatD and GatE.

The catalysed reaction is L-glutamyl-tRNA(Gln) + L-glutamine + ATP + H2O = L-glutaminyl-tRNA(Gln) + L-glutamate + ADP + phosphate + H(+). Its function is as follows. Allows the formation of correctly charged Gln-tRNA(Gln) through the transamidation of misacylated Glu-tRNA(Gln) in organisms which lack glutaminyl-tRNA synthetase. The reaction takes place in the presence of glutamine and ATP through an activated gamma-phospho-Glu-tRNA(Gln). The GatDE system is specific for glutamate and does not act on aspartate. This Methanosphaera stadtmanae (strain ATCC 43021 / DSM 3091 / JCM 11832 / MCB-3) protein is Glutamyl-tRNA(Gln) amidotransferase subunit D.